Here is a 444-residue protein sequence, read N- to C-terminus: Phosphoglucosamine mutase (444 aa).

The active-site Phosphoserine intermediate is the S101. Positions 101, 240, 242, and 244 each coordinate Mg(2+). S101 carries the post-translational modification Phosphoserine.

It belongs to the phosphohexose mutase family. The cofactor is Mg(2+). In terms of processing, activated by phosphorylation.

It carries out the reaction alpha-D-glucosamine 1-phosphate = D-glucosamine 6-phosphate. Catalyzes the conversion of glucosamine-6-phosphate to glucosamine-1-phosphate. This chain is Phosphoglucosamine mutase, found in Aeromonas salmonicida (strain A449).